The following is a 165-amino-acid chain: Small ribosomal subunit protein uS5 (165 aa).

The S5 DRBM domain maps to 10 to 73 (LVEKLVAVDR…EAARRNMITV (64 aa)).

It belongs to the universal ribosomal protein uS5 family. Part of the 30S ribosomal subunit. Contacts proteins S4 and S8.

Its function is as follows. With S4 and S12 plays an important role in translational accuracy. In terms of biological role, located at the back of the 30S subunit body where it stabilizes the conformation of the head with respect to the body. The polypeptide is Small ribosomal subunit protein uS5 (Acinetobacter baylyi (strain ATCC 33305 / BD413 / ADP1)).